Here is a 433-residue protein sequence, read N- to C-terminus: Putative ankyrin repeat protein R784 (433 aa).

ANK repeat units follow at residues 44 to 70 (NQNL…KTDV), 71 to 101 (NGLK…NNDL), 102 to 131 (LDLH…IVII), 179 to 205 (FYDS…NQCS), 206 to 235 (VRQK…RIFS), 237 to 264 (RRLI…IDLA), 265 to 294 (QNNF…DIHF), 296 to 321 (NGEC…NKVY), 322 to 351 (MSEK…ACMS), and 380 to 409 (NMRK…KLRE).

This is Putative ankyrin repeat protein R784 from Acanthamoeba polyphaga mimivirus (APMV).